The following is a 251-amino-acid chain: Capsid protein (251 aa).

A Bipartite nuclear localization signal motif is present at residues 3–20; it reads KRDAPWRLMAGTSKVSRS. Positions 35–49 match the Nuclear localization signal motif; it reads KAAAWVNRPMYRKPR. A zinc finger lies at 63–80; the sequence is CEGPCKVQSYEQRHDISH. The Nuclear export signal motif lies at 96–117; sequence ITHRVGKRFCVKSVYILGKIWM. The short motif at 195–242 is the Bipartite nuclear localization signal element; it reads RRFWKVNNHVVYNHQEAGKYENHTENALLLYMACTHASNPVYATLKIR.

The protein belongs to the geminiviridae capsid protein family. As to quaternary structure, homomultimer. Binds to single-stranded and double-stranded viral DNA. Interacts (via nuclear localization signals) with host importin alpha-1a.

The protein localises to the virion. Its subcellular location is the host nucleus. Its function is as follows. Encapsidates the viral DNA into characteristic twinned ('geminate') particles. Binds the genomic viral ssDNA and shuttles it into and out of the cell nucleus. The CP of bipartite geminiviruses is not required for cell-to-cell or systemic movement. The polypeptide is Capsid protein (Squash leaf curl virus (SLCV)).